Reading from the N-terminus, the 549-residue chain is Putative lipase ATG15 (549 aa).

Residues Met-1 to Lys-19 lie on the Cytoplasmic side of the membrane. The chain crosses the membrane as a helical; Signal-anchor for type II membrane protein span at residues Gly-20–Ser-42. At Asn-43–Ala-549 the chain is on the lumenal side. 2 N-linked (GlcNAc...) asparagine glycosylation sites follow: Asn-204 and Asn-315. The active-site Charge relay system is the Ser-331. Asn-448 carries an N-linked (GlcNAc...) asparagine glycan. Residues Asp-474–Pro-510 form a disordered region. Residues Ser-487–Val-504 show a composition bias toward low complexity.

Belongs to the AB hydrolase superfamily. Lipase family. Binds to both phosphatidylinositol (PI) and phosphatidylinositol 3,5-bisphosphate (PIP2).

It localises to the endosome. The protein resides in the multivesicular body membrane. It is found in the prevacuolar compartment membrane. It carries out the reaction a triacylglycerol + H2O = a diacylglycerol + a fatty acid + H(+). In terms of biological role, lipase which is essential for lysis of subvacuolar cytoplasm to vacuole targeted bodies and intravacuolar autophagic bodies. Involved in the lysis of intravacuolar multivesicular body (MVB) vesicles. The intravacuolar membrane disintegration by ATG15 is critical to life span extension. The sequence is that of Putative lipase ATG15 (ATG15) from Yarrowia lipolytica (strain CLIB 122 / E 150) (Yeast).